The sequence spans 458 residues: GTPase Der (458 aa).

EngA-type G domains follow at residues 3 to 167 (PVVV…PETE) and 176 to 351 (IKLA…AQYT). Residues 9 to 16 (GRPNVGKS), 56 to 60 (DTGGF), 119 to 122 (NKID), 182 to 189 (GRPNVGKS), 229 to 233 (DTAGL), and 294 to 297 (NKWD) contribute to the GTP site. The 85-residue stretch at 352–436 (FNIKTGELNN…PIRLFFREKP (85 aa)) folds into the KH-like domain.

Belongs to the TRAFAC class TrmE-Era-EngA-EngB-Septin-like GTPase superfamily. EngA (Der) GTPase family. Associates with the 50S ribosomal subunit.

In terms of biological role, GTPase that plays an essential role in the late steps of ribosome biogenesis. This is GTPase Der from Desulfosudis oleivorans (strain DSM 6200 / JCM 39069 / Hxd3) (Desulfococcus oleovorans).